Reading from the N-terminus, the 344-residue chain is Phenylalanine--tRNA ligase alpha subunit (344 aa).

Residue Glu255 coordinates Mg(2+).

It belongs to the class-II aminoacyl-tRNA synthetase family. Phe-tRNA synthetase alpha subunit type 1 subfamily. As to quaternary structure, tetramer of two alpha and two beta subunits. Mg(2+) is required as a cofactor.

The protein localises to the cytoplasm. The catalysed reaction is tRNA(Phe) + L-phenylalanine + ATP = L-phenylalanyl-tRNA(Phe) + AMP + diphosphate + H(+). This chain is Phenylalanine--tRNA ligase alpha subunit, found in Cytophaga hutchinsonii (strain ATCC 33406 / DSM 1761 / CIP 103989 / NBRC 15051 / NCIMB 9469 / D465).